The following is a 326-amino-acid chain: Tetraacyldisaccharide 4'-kinase (326 aa).

Residue 54-61 (SVGGTGKT) coordinates ATP.

It belongs to the LpxK family.

It carries out the reaction a lipid A disaccharide + ATP = a lipid IVA + ADP + H(+). Its pathway is glycolipid biosynthesis; lipid IV(A) biosynthesis; lipid IV(A) from (3R)-3-hydroxytetradecanoyl-[acyl-carrier-protein] and UDP-N-acetyl-alpha-D-glucosamine: step 6/6. Its function is as follows. Transfers the gamma-phosphate of ATP to the 4'-position of a tetraacyldisaccharide 1-phosphate intermediate (termed DS-1-P) to form tetraacyldisaccharide 1,4'-bis-phosphate (lipid IVA). This chain is Tetraacyldisaccharide 4'-kinase, found in Rickettsia canadensis (strain McKiel).